Reading from the N-terminus, the 353-residue chain is DNA integrity scanning protein DisA (353 aa).

The 139-residue stretch at 6 to 144 (DKELMNILKI…GGIKYVLRDS (139 aa)) folds into the DAC domain. Residues Gly-73, Leu-91, and 104 to 108 (TRHRT) contribute to the ATP site.

The protein belongs to the DisA family. As to quaternary structure, homooctamer. It depends on Mg(2+) as a cofactor.

The catalysed reaction is 2 ATP = 3',3'-c-di-AMP + 2 diphosphate. Its function is as follows. Participates in a DNA-damage check-point that is active prior to asymmetric division when DNA is damaged. DisA forms globular foci that rapidly scan along the chromosomes during sporulation, searching for lesions. When a lesion is present, DisA pauses at the lesion site. This triggers a cellular response that culminates in a temporary block in sporulation initiation. In terms of biological role, also has diadenylate cyclase activity, catalyzing the condensation of 2 ATP molecules into cyclic di-AMP (c-di-AMP). c-di-AMP acts as a signaling molecule that couples DNA integrity with progression of sporulation. The rise in c-di-AMP level generated by DisA while scanning the chromosome, operates as a positive signal that advances sporulation; upon encountering a lesion, the DisA focus arrests at the damaged site and halts c-di-AMP synthesis. The sequence is that of DNA integrity scanning protein DisA from Clostridium botulinum (strain 657 / Type Ba4).